The following is a 281-amino-acid chain: Ribose-phosphate pyrophosphokinase (281 aa).

Residues D33–E35 and R90–Q91 contribute to the ATP site. H123 and D161 together coordinate Mg(2+). K185 is a catalytic residue. The D-ribose 5-phosphate site is built by R187 and D211.

It belongs to the ribose-phosphate pyrophosphokinase family. Class III (archaeal) subfamily. Requires Mg(2+) as cofactor.

It is found in the cytoplasm. It catalyses the reaction D-ribose 5-phosphate + ATP = 5-phospho-alpha-D-ribose 1-diphosphate + AMP + H(+). It participates in metabolic intermediate biosynthesis; 5-phospho-alpha-D-ribose 1-diphosphate biosynthesis; 5-phospho-alpha-D-ribose 1-diphosphate from D-ribose 5-phosphate (route I): step 1/1. Its function is as follows. Involved in the biosynthesis of the central metabolite phospho-alpha-D-ribosyl-1-pyrophosphate (PRPP) via the transfer of pyrophosphoryl group from ATP to 1-hydroxyl of ribose-5-phosphate (Rib-5-P). The protein is Ribose-phosphate pyrophosphokinase of Halobacterium salinarum (strain ATCC 29341 / DSM 671 / R1).